Reading from the N-terminus, the 127-residue chain is Large ribosomal subunit protein bL19 (127 aa).

This sequence belongs to the bacterial ribosomal protein bL19 family.

This protein is located at the 30S-50S ribosomal subunit interface and may play a role in the structure and function of the aminoacyl-tRNA binding site. The protein is Large ribosomal subunit protein bL19 of Synechococcus sp. (strain JA-3-3Ab) (Cyanobacteria bacterium Yellowstone A-Prime).